The sequence spans 150 residues: 3-dehydroquinate dehydratase (150 aa).

Tyr26 acts as the Proton acceptor in catalysis. 3 residues coordinate substrate: Asn77, His83, and Asp90. Catalysis depends on His103, which acts as the Proton donor. Residues 104–105 (LS) and Arg114 contribute to the substrate site.

Belongs to the type-II 3-dehydroquinase family. As to quaternary structure, homododecamer.

It carries out the reaction 3-dehydroquinate = 3-dehydroshikimate + H2O. It functions in the pathway metabolic intermediate biosynthesis; chorismate biosynthesis; chorismate from D-erythrose 4-phosphate and phosphoenolpyruvate: step 3/7. In terms of biological role, catalyzes a trans-dehydration via an enolate intermediate. The sequence is that of 3-dehydroquinate dehydratase from Yersinia enterocolitica serotype O:8 / biotype 1B (strain NCTC 13174 / 8081).